The sequence spans 633 residues: Kelch-like protein diablo (633 aa).

Residues 1-62 are disordered; the sequence is MGDLPGSTGG…ARLSHTSEKH (62 aa). The span at 7–25 shows a compositional bias: gly residues; sequence STGGGGGVGGGGNGGGGPT. The span at 26-45 shows a compositional bias: low complexity; the sequence is IAGTNGNSTTGPGSSTGSTG. Residues 80 to 147 enclose the BTB domain; that stretch reads CDVVLNVGGR…CYTAHIIVEE (68 aa). The BACK domain occupies 182 to 284; the sequence is CLGIRAFADT…SPKFLVGTVG (103 aa). 6 Kelch repeats span residues 331–377, 379–425, 426–472, 474–519, 521–566, and 567–613; these read VLFA…VLND, LYAV…VLDG, FLYA…VLGG, LYAI…VFNN, IYAV…VVNG, and QLYA…VMRA.

It functions in the pathway protein modification; protein ubiquitination. Functionally, probable substrate-specific adapter of an E3 ubiquitin-protein ligase complex which mediates the ubiquitination and subsequent proteasomal degradation of target proteins. May have a role in synapse differentiation and growth. This Drosophila ananassae (Fruit fly) protein is Kelch-like protein diablo.